Reading from the N-terminus, the 962-residue chain is MYHPGRSPSFLITLANVICAAILFDIHTGGYQPGSLIPIVAWMTPFVTLLWLSASFATYLYKYVRTRLLPEEKVARVYYTAQSAPYFDPALGVMMQFAPSHGGASIEVQVNPSWISLLGGSLKINGDDASNESAVLGSFYSSVKPGDEPASLVAIKSGPQTIGFGCRTKIDGDDCLFTANHVWNNSMRPTALAKRGKQVAIEDWETPLSCDHKMLDFVVVRVPKHVWSKLGVKATQLVCPSDKDAVTCYGGSSSDNLLSGTGVCSKVDFSWKLTHSCPTAAGWSGTPIYSSRGVVGMHVGFEDIGKLNRGVNAFYVSNYLLRSQETLPPELSVIEIPFEDVETRSYEFIEVEIKGRGKAKLGKREFAWIPESGKYWADDDDDSLPPPPKVVDGKMVWSSAQETVAEPLNLPAGGRVKALAALSQLAGYDFKEGEAASTRGMPLRFVGQSACKFRELCRKDTPDEVLRATRVFPELSDFSWPERGSKAELHSLLLQAGKFNPTGIPRNLEGACQNLLERYPASKSCYCLRGEAWSFDAVYEEVCKKAQSAEINEKASPGVPLSRLASTNKDLLKRHLELVALCVTERLFLLSEAEDLLDESPVDLVRRGLCDPVRLFVKQEPHASRKVREGRFRLISSVSLVDQLVERMLFGPQNQLEIAEWEHIPSKPGMGLSLRQQAKSLFDDLRVKHSRCPAAEADISGFDWSVQDWELWADVEMRIVLGGFGHKLAKAAQNRFSCFMNSVFQLSDGTLIEQQLPGIMKSGSYCTSSTNSRIRCLMAELIGSPWCIAMGDDSVEGWVDGAKDKYMRLGHTCKDYKPCATTISGRLYEVEFCSHVIREDRCWLASWPKTLFKYLSEGKWFFEDLERDVSSSPHWPRIRHYVVGNTPSPHKTNLQNQSPRYGEEVDKTTVNQGYSEHSGSPGHSIEEAQEPEAAPFCCEAASVYPGWGVHGPYCSGDYGSLT.

Transmembrane regions (helical) follow at residues 10–30 (FLIT…HTGG), 36–56 (LIPI…SASF), and 74–96 (VARV…VMMQ). The 201-residue stretch at 135–335 (VLGSFYSSVK…TLPPELSVIE (201 aa)) folds into the Peptidase S39 domain. Residues histidine 181, aspartate 216, and serine 284 each act as for protease activity in the active site. Residues 692 to 806 (CPAAEADISG…GWVDGAKDKY (115 aa)) form the RdRp catalytic domain.

Post-translationally, the polyprotein is proteolytically cleaved into several chains by the viral protease.

Its subcellular location is the host membrane. The enzyme catalyses RNA(n) + a ribonucleoside 5'-triphosphate = RNA(n+1) + diphosphate. In terms of biological role, responsible for cleavages of polyprotein P2A and replicase polyprotein P2AB. Its function is as follows. Covalently attached to the 5' extremity of the genomic and subgenomic RNAs. It may serve as a primer for the replicase. Functionally, replicates the viral genome. The sequence is that of Replicase polyprotein P2AB from Glycine max (Soybean).